Consider the following 262-residue polypeptide: tRNA pseudouridine synthase A (262 aa).

Aspartate 52 serves as the catalytic Nucleophile. Tyrosine 110 provides a ligand contact to substrate.

The protein belongs to the tRNA pseudouridine synthase TruA family. Homodimer.

It catalyses the reaction uridine(38/39/40) in tRNA = pseudouridine(38/39/40) in tRNA. Formation of pseudouridine at positions 38, 39 and 40 in the anticodon stem and loop of transfer RNAs. The chain is tRNA pseudouridine synthase A from Hydrogenovibrio crunogenus (strain DSM 25203 / XCL-2) (Thiomicrospira crunogena).